Reading from the N-terminus, the 726-residue chain is uncharacterized protein (726 aa).

Positions 10–135 constitute a Thioredoxin domain; that stretch reads MRISWVVAFI…LLDFVETHLN (126 aa). Disordered regions lie at residues 133–153 and 227–280; these read HLNP…TDED and VTSV…NPTG. A compositionally biased stretch (acidic residues) spans 138–153; the sequence is TDPDIPSDEDVLTDED. A helical transmembrane segment spans residues 675–695; the sequence is IRVLYMVLGIVTVGILVWYFS. At S708 the chain carries Phosphoserine.

Its subcellular location is the membrane. This is an uncharacterized protein from Schizosaccharomyces pombe (strain 972 / ATCC 24843) (Fission yeast).